A 696-amino-acid chain; its full sequence is DNA-directed RNA polymerase subunit beta N-terminal section (696 aa).

It belongs to the RNA polymerase beta chain family. In terms of assembly, in plastids the minimal PEP RNA polymerase catalytic core is composed of four subunits: alpha, beta, beta', and beta''. When a (nuclear-encoded) sigma factor is associated with the core the holoenzyme is formed, which can initiate transcription.

The protein localises to the plastid. The protein resides in the chloroplast. The enzyme catalyses RNA(n) + a ribonucleoside 5'-triphosphate = RNA(n+1) + diphosphate. Its function is as follows. DNA-dependent RNA polymerase catalyzes the transcription of DNA into RNA using the four ribonucleoside triphosphates as substrates. The chain is DNA-directed RNA polymerase subunit beta N-terminal section (rpoB1) from Stigeoclonium helveticum (Green alga).